The chain runs to 383 residues: Cobalt-precorrin-5B C(1)-methyltransferase (383 aa).

Positions 1-24 are disordered; that stretch reads MQPSARRPFDLATPAPNGLRRGRT.

This sequence belongs to the CbiD family.

It carries out the reaction Co-precorrin-5B + S-adenosyl-L-methionine = Co-precorrin-6A + S-adenosyl-L-homocysteine. The protein operates within cofactor biosynthesis; adenosylcobalamin biosynthesis; cob(II)yrinate a,c-diamide from sirohydrochlorin (anaerobic route): step 6/10. In terms of biological role, catalyzes the methylation of C-1 in cobalt-precorrin-5B to form cobalt-precorrin-6A. This chain is Cobalt-precorrin-5B C(1)-methyltransferase, found in Ralstonia nicotianae (strain ATCC BAA-1114 / GMI1000) (Ralstonia solanacearum).